Here is a 70-residue protein sequence, read N- to C-terminus: Putative antitoxin VapB34 (70 aa).

Functionally, antitoxin component of a possible type II toxin-antitoxin (TA) system. The cognate toxin is VapC34. The chain is Putative antitoxin VapB34 (vapB34) from Mycobacterium tuberculosis (strain CDC 1551 / Oshkosh).